A 600-amino-acid polypeptide reads, in one-letter code: MIYSGDVQRIEPAPVAGPAPLDVAHLILAGFDRHYALFRYSAQRAKSLFESGDWHGMQRLSRERIEYYDMRVRECATQLDSALRGSDARTADGSRANGSAALSEAQTAFWQAVKQEFVGLLADHRQPECAETFFNSVSCRILHRDYFHNDFLFVRPAIATDYLDSRIPSYRVYYPVAEGLHKSLIRMVADFGLAVPYADLPRDAGPRLASDCQIQVLGSLFFRNTGAYIVGRLINQGTVYPFAVALRRNPAGQVCLDALLLGTDDLSTLFSFTRAYFLVDMETPAAVVNFLASLLPRKPKAELYTMLGLQKQGKTLFYRDFLHHLTHSRDAFDIAPGIRGMVMCVFTLPSYPYVFKLIKDRIDKDGMDHATVRRKYQMVKLHDRVGRMADTWEYSQVALPRSRFAPRLLEELRRLVPSLIEENGDTVVIRHVYIERRMMPLNLYLRHASDPLLEVAVREYGDAIRQLATANIFPGDMLYKNFGVTRLGRVVFYDYDEIQRMTEMNFRAIPPAPNEEAELSSEPWYAVGPNDVFPEEFGRFLLGDPRVRQAFLRHHADLLAPQWWQACRARVAQGRIEEFFPYDTDRRLHPQAAPPPRAAA.

Residues 335 to 341 and K356 contribute to the ATP site; that span reads APGIRGM. Residue D390 is part of the active site.

The protein belongs to the AceK family.

The protein localises to the cytoplasm. It carries out the reaction L-seryl-[isocitrate dehydrogenase] + ATP = O-phospho-L-seryl-[isocitrate dehydrogenase] + ADP + H(+). Bifunctional enzyme which can phosphorylate or dephosphorylate isocitrate dehydrogenase (IDH) on a specific serine residue. This is a regulatory mechanism which enables bacteria to bypass the Krebs cycle via the glyoxylate shunt in response to the source of carbon. When bacteria are grown on glucose, IDH is fully active and unphosphorylated, but when grown on acetate or ethanol, the activity of IDH declines drastically concomitant with its phosphorylation. This chain is Isocitrate dehydrogenase kinase/phosphatase, found in Bordetella parapertussis (strain 12822 / ATCC BAA-587 / NCTC 13253).